We begin with the raw amino-acid sequence, 132 residues long: MVAIPRLRDTATVFVLSGYEYFLGFLIICSLVPVLALAASALLRPKSGRMIRLTTYESGMEPIGGAWIQFNVRYYMFALVFVIFDVETVFLYPWAVAFHQLGLLAFIEALIFIAILVVALVYAWRKRALEWS.

Helical transmembrane passes span 22–42 (FLGF…ASAL), 76–96 (MFAL…PWAV), and 101–121 (LGLL…VALV).

The protein belongs to the complex I subunit 3 family. In terms of assembly, NDH-1 can be composed of about 15 different subunits; different subcomplexes with different compositions have been identified which probably have different functions.

The protein resides in the cellular thylakoid membrane. The enzyme catalyses a plastoquinone + NADH + (n+1) H(+)(in) = a plastoquinol + NAD(+) + n H(+)(out). It catalyses the reaction a plastoquinone + NADPH + (n+1) H(+)(in) = a plastoquinol + NADP(+) + n H(+)(out). Functionally, NDH-1 shuttles electrons from an unknown electron donor, via FMN and iron-sulfur (Fe-S) centers, to quinones in the respiratory and/or the photosynthetic chain. The immediate electron acceptor for the enzyme in this species is believed to be plastoquinone. Couples the redox reaction to proton translocation, and thus conserves the redox energy in a proton gradient. Cyanobacterial NDH-1 also plays a role in inorganic carbon-concentration. The protein is NAD(P)H-quinone oxidoreductase subunit 3 (ndhC) of Thermosynechococcus vestitus (strain NIES-2133 / IAM M-273 / BP-1).